The primary structure comprises 742 residues: Two pore calcium channel protein 1 (742 aa).

Residues 1-37 are disordered; sequence MSEAEAPLITEEAAERGLASSGSRRLSDGAGGQGSRK. Over 1-82 the chain is Cytoplasmic; sequence MSEAEAPLIT…NDTRFGRAMS (82 aa). A helical transmembrane segment spans residues 83-103; it reads FYFVYLRLDWLWSLNLFALIL. Over 104-140 the chain is Extracellular; it reads LNFLEKPLWCRKDALQAYDQRDLYFLGQLPYFSKTES. A helical transmembrane segment spans residues 141 to 161; that stretch reads LIYEGLTLVILVMDIFCPLSY. The Cytoplasmic portion of the chain corresponds to 162-176; the sequence is EGLNIFWRSTTNKLK. The chain crosses the membrane as a helical span at residues 177-197; the sequence is IVLLFILACDILVFAFSSQPF. The Extracellular segment spans residues 198-204; it reads RLAPYIR. Residues 205–226 form a helical; Voltage-sensor membrane-spanning segment; that stretch reads VVFLIMTIRELRMCAITLAGLI. A helical membrane pass occupies residues 227–247; that stretch reads GTYLNVLALSLLFLLFASWLA. Topologically, residues 248–258 are extracellular; sequence YVTFEDTPQGK. An intramembrane region (pore-forming) is located at residues 259–273; that stretch reads TIFSSYGVTLYQMFV. Over 274-296 the chain is Extracellular; that stretch reads LFTTSNNPDVWVHAYKIPRWYSL. Residues 297-317 form a helical membrane-spanning segment; sequence FFIVYVLLGVYFLTNLILAVI. Residues 318-446 lie on the Cytoplasmic side of the membrane; that stretch reads YDSFKEQFAK…SFVRSRMFEY (129 aa). 2 EF-hand domains span residues 335 to 370 and 376 to 411; these read IRKN…LNKY and TSRE…IAIK. A helical transmembrane segment spans residues 447 to 467; the sequence is IIVFVLLINLVAVIIETTLDI. Topologically, residues 468 to 480 are extracellular; it reads ENSSSQETWQEVE. Asn-469 carries an N-linked (GlcNAc...) asparagine glycan. The chain crosses the membrane as a helical span at residues 481 to 501; that stretch reads FFLGWIYVAEMALKIFSLGFG. Residues 502-510 lie on the Cytoplasmic side of the membrane; it reads AYWMEGQNK. The helical transmembrane segment at 511 to 531 threads the bilayer; that stretch reads FDFVLTWTIFIGETLTFAFPS. The Extracellular segment spans residues 532 to 540; sequence KLPFLSNGE. The helical; Voltage-sensor transmembrane segment at 541–558 threads the bilayer; it reads WIRYLLLGRVLRLTRILL. Residues 559 to 582 lie on the Cytoplasmic side of the membrane; that stretch reads QVQRFRAFVATFFTLMSSLMPYLG. Residues 583–603 form a helical membrane-spanning segment; that stretch reads IVFCVLCMYCSIGLQIFGGIV. At 604–627 the chain is on the extracellular side; it reads YAGNPTLEETDLFNNDYLLFNFND. The pore-forming intramembrane region spans 628–642; it reads YPSGMVTLFNLLVMG. Residues 643 to 663 are Extracellular-facing; that stretch reads NWQVWMESYWQLTGTSWSLIY. The chain crosses the membrane as a helical span at residues 664-684; sequence FVSFYLISILLLLNLIVAFVL. At 685 to 742 the chain is on the cytoplasmic side; that stretch reads EAFFAEMELEKGEEVDIQNPTSGGIKKRRSMRVRSKGTMVDILLHHMLSNELDGSQNS.

The protein belongs to the calcium channel alpha-1 subunit (TC 1.A.1.11) family. Two pore calcium channel subfamily. As to quaternary structure, homodimer.

Its subcellular location is the membrane. Its activity is regulated as follows. Inhibited by Al(3+). Functionally, functions as a voltage-gated inward-rectifying Ca(2+) channel (VDCC) across the plasma membrane that mediates sucrose-induced Ca(2+) influx in autotrophically grown leaf cells. Acts as the major ROS-responsive Ca(2+) channel and is the possible target of Al-dependent inhibition. Plays a regulatory role in defense responses. The sequence is that of Two pore calcium channel protein 1 (TPC1) from Triticum aestivum (Wheat).